The chain runs to 79 residues: MSLEALDQLQEKVQKMLEANALLQMEIEEFKEKNIVLEEKINAISAQQKDLVDQNNELKQEKTVWQNRLNSLLGKMDDI.

The stretch at 1–78 forms a coiled coil; that stretch reads MSLEALDQLQ…LNSLLGKMDD (78 aa).

Belongs to the ZapB family. In terms of assembly, homodimer. The ends of the coiled-coil dimer bind to each other, forming polymers. Interacts with FtsZ.

Its subcellular location is the cytoplasm. In terms of biological role, non-essential, abundant cell division factor that is required for proper Z-ring formation. It is recruited early to the divisome by direct interaction with FtsZ, stimulating Z-ring assembly and thereby promoting cell division earlier in the cell cycle. Its recruitment to the Z-ring requires functional FtsA or ZipA. The polypeptide is Cell division protein ZapB (Hamiltonella defensa subsp. Acyrthosiphon pisum (strain 5AT)).